Consider the following 673-residue polypeptide: Armadillo repeat-containing protein 8 (673 aa).

N-acetylalanine is present on Ala2. 14 ARM repeats span residues 51–92, 95–134, 138–176, 178–217, 224–265, 269–309, 313–352, 374–413, 416–455, 458–497, 501–540, 543–585, 588–627, and 634–673; these read NKQK…SLAM, ENNV…TIFT, TPEE…HCCK, PDHQ…VLAF, MTLV…YMCR, IRTD…YLIE, ELQR…HDLK, DIRK…SLSR, QQLR…NLLL, SPSK…NMAF, QKIK…NLLS, PHID…NIAD, TAKE…NLTW, and QERQ…QYLA. Ser337 is modified (phosphoserine). Phosphoserine is present on Ser512.

In terms of assembly, identified in the CTLH complex that contains GID4, RANBP9 and/or RANBP10, MKLN1, MAEA, RMND5A (or alternatively its paralog RMND5B), GID8, ARMC8, WDR26 and YPEL5. Within this complex, MAEA, RMND5A (or alternatively its paralog RMND5B), GID8, WDR26, and RANBP9 and/or RANBP10 form the catalytic core, while GID4, MKLN1, ARMC8 and YPEL5 have ancillary roles.

It localises to the nucleus. It is found in the cytoplasm. Its function is as follows. Component of the CTLH E3 ubiquitin-protein ligase complex that selectively accepts ubiquitin from UBE2H and mediates ubiquitination and subsequent proteasomal degradation of the transcription factor HBP1. The protein is Armadillo repeat-containing protein 8 (Armc8) of Mus musculus (Mouse).